The following is a 481-amino-acid chain: Glutamyl-tRNA(Gln) amidotransferase subunit A (481 aa).

Active-site charge relay system residues include Lys74 and Ser149. Ser173 (acyl-ester intermediate) is an active-site residue.

The protein belongs to the amidase family. GatA subfamily. In terms of assembly, heterotrimer of A, B and C subunits.

It carries out the reaction L-glutamyl-tRNA(Gln) + L-glutamine + ATP + H2O = L-glutaminyl-tRNA(Gln) + L-glutamate + ADP + phosphate + H(+). Its function is as follows. Allows the formation of correctly charged Gln-tRNA(Gln) through the transamidation of misacylated Glu-tRNA(Gln) in organisms which lack glutaminyl-tRNA synthetase. The reaction takes place in the presence of glutamine and ATP through an activated gamma-phospho-Glu-tRNA(Gln). In Francisella tularensis subsp. holarctica (strain FTNF002-00 / FTA), this protein is Glutamyl-tRNA(Gln) amidotransferase subunit A.